A 329-amino-acid chain; its full sequence is Interferon regulatory factor 1 (329 aa).

The segment at residues 5–113 is a DNA-binding region (IRF tryptophan pentad repeat); the sequence is RMRMRPWLEM…SAVRVYRMLP (109 aa). Lysine 78 is modified (N6-acetyllysine). The tract at residues 93–166 is disordered; that stretch reads EVKDQSRNKG…LPDDHSSYTT (74 aa). Residues 146 to 166 show a composition bias toward polar residues; it reads DTFSDGLSSSTLPDDHSSYTT. Residues lysine 276 and lysine 300 each participate in a glycyl lysine isopeptide (Lys-Gly) (interchain with G-Cter in SUMO) cross-link.

This sequence belongs to the IRF family. As to quaternary structure, monomer. Homodimer. Interacts with EP300. Interacts with MYD88. Interacts with PIAS3. Interacts with SPOP. In terms of processing, phosphorylated by CK2 and this positively regulates its activity. Post-translationally, ubiquitinated in a SPOP-depedent manner. Sumoylation represses the transcriptional activity and displays enhanced resistance to protein degradation. Sumoylated by UBE2I/UBC9 and SUMO1. Inactivates the tumor suppressor activity. Elevated levels in tumor cells. Major site is Lys-276. Sumoylation is enhanced by PIAS3. Desumoylated by SENP1 in tumor cells and appears to compete with ubiquitination on C-terminal sites. Ubiquitinated. Appears to compete with sumoylation on C-terminal sites.

It is found in the nucleus. It localises to the cytoplasm. With respect to regulation, activated by MYD88. Functionally, transcriptional regulator which displays a remarkable functional diversity in the regulation of cellular responses. Regulates transcription of IFN and IFN-inducible genes, host response to viral and bacterial infections, regulation of many genes expressed during hematopoiesis, inflammation, immune responses and cell proliferation and differentiation, regulation of the cell cycle and induction of growth arrest and programmed cell death following DNA damage. Stimulates both innate and acquired immune responses through the activation of specific target genes and can act as a transcriptional activator and repressor regulating target genes by binding to an interferon-stimulated response element (ISRE) in their promoters. Has an essentail role in IFNG-dependent immunity to mycobacteria. Binds to a consensus sequence in gene promoters. Its target genes for transcriptional activation activity are: genes involved in anti-viral response, such as IFN-alpha/beta, RIGI, TNFSF10/TRAIL, ZBP1, OAS1/2, PIAS1/GBP, EIF2AK2/PKR and RSAD2/viperin; antibacterial response, such as GBP2, GBP5, IRGB10 and NOS2/INOS; anti-proliferative response, such as p53/TP53, LOX and CDKN1A; apoptosis, such as BBC3/PUMA, CASP1, CASP7 and CASP8; immune response, such as IL7, IL12A/B and IL15, PTGS2/COX2 and CYBB; DNA damage responses and DNA repair, such as POLQ/POLH; MHC class I expression, such as TAP1, PSMB9/LMP2, PSME1/PA28A, PSME2/PA28B and B2M and MHC class II expression, such as CIITA; metabolic enzymes, such as ACOD1/IRG1. Represses genes involved in anti-proliferative response, such as BIRC5/survivin, CCNB1, CCNE1, CDK1, CDK2 and CDK4 and in immune response, such as FOXP3, IL4, ANXA2 and TLR4. Stimulates p53/TP53-dependent transcription through enhanced recruitment of EP300 leading to increased acetylation of p53/TP53. Plays an important role in immune response directly affecting NK maturation and activity, macrophage production of IL12, Th1 development and maturation of CD8+ T-cells. Also implicated in the differentiation and maturation of dendritic cells and in the suppression of regulatory T (Treg) cells development. Acts as a tumor suppressor and plays a role not only in antagonism of tumor cell growth but also in stimulating an immune response against tumor cells. In Mus musculus (Mouse), this protein is Interferon regulatory factor 1 (Irf1).